The primary structure comprises 195 residues: Cell division protein SepF (195 aa).

Residues 32-54 (RYSKTNSSETLAPEEEEPIRNRR) are disordered.

Belongs to the SepF family. As to quaternary structure, homodimer. Interacts with FtsZ.

The protein localises to the cytoplasm. In terms of biological role, cell division protein that is part of the divisome complex and is recruited early to the Z-ring. Probably stimulates Z-ring formation, perhaps through the cross-linking of FtsZ protofilaments. Its function overlaps with FtsA. This is Cell division protein SepF from Gloeothece citriformis (strain PCC 7424) (Cyanothece sp. (strain PCC 7424)).